The chain runs to 385 residues: Glucans biosynthesis protein C (385 aa).

The next 10 helical transmembrane spans lie at 17–37, 60–80, 91–111, 137–157, 173–193, 212–232, 239–259, 274–294, 311–331, and 338–358; these read AWLM…SHTW, MQVF…RYPL, VGIP…IMLQ, ISHL…VWIF, KFSM…YAVI, FIVM…LAFI, LFTT…VAYL, TESV…FSFG, ASLF…AYIT, and WLGF…LYEI.

Belongs to the acyltransferase 3 family. OpgC subfamily.

Its subcellular location is the cell membrane. Its pathway is glycan metabolism; osmoregulated periplasmic glucan (OPG) biosynthesis. Functionally, necessary for the succinyl substitution of periplasmic glucans. Could catalyze the transfer of succinyl residues from the cytoplasmic side of the membrane to the nascent glucan backbones on the periplasmic side of the membrane. This is Glucans biosynthesis protein C from Escherichia coli (strain K12 / MC4100 / BW2952).